The following is a 525-amino-acid chain: GMP synthase [glutamine-hydrolyzing] (525 aa).

The Glutamine amidotransferase type-1 domain occupies 9-207 (RILILDFGSQ…VHEICGCPAD (199 aa)). The active-site Nucleophile is the cysteine 86. Residues histidine 181 and glutamate 183 contribute to the active site. The region spanning 208–400 (WTPGNIVDDL…LGLPADMVYR (193 aa)) is the GMPS ATP-PPase domain. 235–241 (SGGVDSS) provides a ligand contact to ATP.

As to quaternary structure, homodimer.

It carries out the reaction XMP + L-glutamine + ATP + H2O = GMP + L-glutamate + AMP + diphosphate + 2 H(+). The protein operates within purine metabolism; GMP biosynthesis; GMP from XMP (L-Gln route): step 1/1. Its function is as follows. Catalyzes the synthesis of GMP from XMP. This chain is GMP synthase [glutamine-hydrolyzing], found in Alkalilimnicola ehrlichii (strain ATCC BAA-1101 / DSM 17681 / MLHE-1).